The chain runs to 450 residues: Sulfide:quinone oxidoreductase, mitochondrial (450 aa).

Residues 53–54 (SG), E75, Q83, and V118 each bind FAD. The residue at position 173 (K173) is an N6-acetyllysine. C201 functions as the Cysteine persulfide intermediate in the catalytic mechanism. A disulfide bridge connects residues C201 and C379. Position 336 (D336) interacts with FAD. S343 bears the Phosphoserine mark. 344 to 347 (KTAA) contributes to the FAD binding site. The Cysteine persulfide intermediate role is filled by C379.

This sequence belongs to the SQRD family. The cofactor is FAD.

It is found in the mitochondrion. It catalyses the reaction ubiquinone-10 + hydrogen sulfide + sulfite + 2 H(+) = ubiquinol-10 + thiosulfate. It carries out the reaction a quinone + hydrogen sulfide + glutathione + H(+) = S-sulfanylglutathione + a quinol. The catalysed reaction is ubiquinone-10 + hydrogen sulfide + glutathione + H(+) = S-sulfanylglutathione + ubiquinol-10. Catalyzes the oxidation of hydrogen sulfide with the help of a quinone, such as ubiquinone-10, giving rise to thiosulfate and ultimately to sulfane (molecular sulfur) atoms. Requires an additional electron acceptor; can use sulfite, sulfide or cyanide (in vitro). It is believed the in vivo electron acceptor is glutathione. The sequence is that of Sulfide:quinone oxidoreductase, mitochondrial from Homo sapiens (Human).